We begin with the raw amino-acid sequence, 320 residues long: uncharacterized protein (320 aa).

Residues 13–132 (ALVLKSLLRE…VLYPEIPSPE (120 aa)) form the Arf-GAP domain. Residues 28-52 (CADCKRNEQPRWASWNLGVFICIRC) form a C4-type zinc finger. Disordered stretches follow at residues 153-212 (NTAS…STRQ), 227-261 (RPQV…YGAF), and 284-320 (NVTS…DVWK). Residues 154 to 176 (TASRSSSAHSVKSTSSATVTNVT) are compositionally biased toward low complexity. Composition is skewed to polar residues over residues 183–210 (SATT…APST) and 228–244 (PQVS…YQNL). Composition is skewed to low complexity over residues 245–257 (PSPV…SSQP) and 295–310 (SPVQ…SLDS).

The protein resides in the cytoplasm. It is found in the golgi apparatus. Its function is as follows. GTPase-activating protein for the ADP ribosylation factor family. This is an uncharacterized protein from Schizosaccharomyces pombe (strain 972 / ATCC 24843) (Fission yeast).